Reading from the N-terminus, the 409-residue chain is Terpredoxin reductase (409 aa).

FAD is bound at residue 7 to 38 (TTVIVGAGHAGTAAAFFLREFGYHGRVLLLSA). 151-159 (GGGFIGLEI) serves as a coordination point for NAD(+).

Requires FAD as cofactor.

The oxidation of alpha-terpineol by cytochrome p450-TERP requires the participation of a flavoprotein, terpredoxin reductase, and an iron-sulfur protein, terpredoxin, to mediate the transfer of electrons from NADH to P450 for oxygen activation. The polypeptide is Terpredoxin reductase (terPA) (Pseudomonas sp).